The chain runs to 160 residues: Transcriptional repressor NrdR (160 aa).

Residues 1–11 (MRCPNCNSLDT) show a composition bias toward polar residues. Residues 1 to 20 (MRCPNCNSLDTQVKDSRPTE) form a disordered region. A zinc finger lies at 3–34 (CPNCNSLDTQVKDSRPTEDSSVIRRRRVCIAC). In terms of domain architecture, ATP-cone spans 49–139 (LTVIKRNGRR…VYRNFREAKD (91 aa)).

It belongs to the NrdR family. It depends on Zn(2+) as a cofactor.

In terms of biological role, negatively regulates transcription of bacterial ribonucleotide reductase nrd genes and operons by binding to NrdR-boxes. This chain is Transcriptional repressor NrdR, found in Rhodopseudomonas palustris (strain HaA2).